We begin with the raw amino-acid sequence, 38 residues long: Photosystem II reaction center protein Y (38 aa).

The chain crosses the membrane as a helical span at residues 2–20 (ILIVLLPILLAATWAFINI).

It belongs to the PsbY family. PSII is composed of 1 copy each of membrane proteins PsbA, PsbB, PsbC, PsbD, PsbE, PsbF, PsbH, PsbI, PsbJ, PsbK, PsbL, PsbM, PsbT, PsbX, PsbY, Psb30/Ycf12, peripheral proteins PsbO, CyanoQ (PsbQ), PsbU, PsbV and a large number of cofactors. It forms dimeric complexes.

The protein resides in the cellular thylakoid membrane. Functionally, loosely associated component of the core of photosystem II (PSII), it is not always seen in crystals. PSII is a light-driven water plastoquinone oxidoreductase, using light energy to abstract electrons from H(2)O, generating a proton gradient subsequently used for ATP formation. The chain is Photosystem II reaction center protein Y from Prochlorococcus marinus (strain MIT 9313).